The following is a 675-amino-acid chain: MLYFIFCQNLSSSSSMSNSILFLSLFLFLPFVVDSLYFNFTSFRQGDPGDIFYHGDATPDEDGTVNFNNAEQTSQVGWITYSKKVPIWSHKTGKASDFSTSFSFKIDARNLSADGHGICFFLAPMGAQLPAYSVGGFLNLFTRKNNYSSSFPLVHVEFDTFNNPGWDPNDVGSHVGINNNSLVSSNYTSWNASSHSQDICHAKISYDSVTKNLSVTWAYELTATSDPKESSSLSYIIDLAKVLPSDVMFGFIAAAGTNTEEHRLLSWELSSSLDSDKADSRIGLVIGISASGFVFLTFMVITTVVVWSRKQRKKKERDIENMISINKDLEREAGPRKFSYKDLVSATNRFSSHRKLGEGGFGAVYEGNLKEINTMVAVKKLSGDSRQGKNEFLNEVKIISKLRHRNLVQLIGWCNEKNEFLLIYELVPNGSLNSHLFGKRPNLLSWDIRYKIGLGLASALLYLHEEWDQCVLHRDIKASNIMLDSEFNVKLGDFGLARLMNHELGSHTTGLAGTFGYMAPEYVMKGSASKESDIYSFGIVLLEIVTGRKSLERTQEDNSDTESDDEKSLVEKVWELYGKQELITSCVDDKLGEDFDKKEAECLLVLGLWCAHPDKNSRPSIKQGIQVMNFESPLPDLPLKRPVAMYYISTTTSSSSPSVNSNGVSVTFSGIEYGR.

The N-terminal stretch at 1–35 is a signal peptide; that stretch reads MLYFIFCQNLSSSSSMSNSILFLSLFLFLPFVVDS. Asn9, Asn39, Asn110, Asn146, Asn179, Asn186, Asn191, and Asn212 each carry an N-linked (GlcNAc...) asparagine glycan. The segment at 36–269 is legume-lectin like; that stretch reads LYFNFTSFRQ…EEHRLLSWEL (234 aa). Over 36 to 281 the chain is Extracellular; sequence LYFNFTSFRQ…SLDSDKADSR (246 aa). The chain crosses the membrane as a helical span at residues 282–302; it reads IGLVIGISASGFVFLTFMVIT. Residues 303 to 675 are Cytoplasmic-facing; that stretch reads TVVVWSRKQR…VTFSGIEYGR (373 aa). A Protein kinase domain is found at 350–631; it reads FSSHRKLGEG…KQGIQVMNFE (282 aa). Residues 356–364 and Lys379 contribute to the ATP site; that span reads LGEGGFGAV. Asp475 acts as the Proton acceptor in catalysis.

This sequence in the C-terminal section; belongs to the protein kinase superfamily. Ser/Thr protein kinase family. It in the N-terminal section; belongs to the leguminous lectin family. In terms of assembly, interacts with ABCG40.

The protein resides in the cell membrane. It catalyses the reaction L-seryl-[protein] + ATP = O-phospho-L-seryl-[protein] + ADP + H(+). It carries out the reaction L-threonyl-[protein] + ATP = O-phospho-L-threonyl-[protein] + ADP + H(+). Its function is as follows. Promotes hydrogen peroxide H(2)O(2) production and cell death. In terms of biological role, involved in resistance response to the pathogenic oomycetes Phytophthora infestans and Phytophthora capsici. This Arabidopsis thaliana (Mouse-ear cress) protein is L-type lectin-domain containing receptor kinase IX.2.